Reading from the N-terminus, the 143-residue chain is Endoribonuclease YbeY (143 aa).

Zn(2+) contacts are provided by His109, His113, and Asp119.

The protein belongs to the endoribonuclease YbeY family. Zn(2+) is required as a cofactor.

The protein resides in the cytoplasm. Functionally, single strand-specific metallo-endoribonuclease involved in late-stage 70S ribosome quality control and in maturation of the 3' terminus of the 16S rRNA. The chain is Endoribonuclease YbeY from Christiangramia forsetii (strain DSM 17595 / CGMCC 1.15422 / KT0803) (Gramella forsetii).